A 131-amino-acid chain; its full sequence is MSASAKLSRMVCLLCGFFSTGISMASSLILLSASDLAGQWTLQQDEAPAICHLELRDSEVAEASGYDLGGDTACLTRWLPSEPRAWRPTPAGIALLERGGLTLMLLGRQGEGDYRVQKGDGGQLVLRRATP.

An N-terminal signal peptide occupies residues 1-26 (MSASAKLSRMVCLLCGFFSTGISMAS). C51 and C74 are oxidised to a cystine.

Belongs to the protease inhibitor I38 family.

It is found in the periplasm. Its function is as follows. Inhibitor of the alkaline protease. It forms a non-covalent bond with the protease and may prevent its autocatalytic cleavage in the periplasm. The polypeptide is Proteinase inhibitor (inh) (Pseudomonas aeruginosa (strain ATCC 15692 / DSM 22644 / CIP 104116 / JCM 14847 / LMG 12228 / 1C / PRS 101 / PAO1)).